Reading from the N-terminus, the 1349-residue chain is Adhesion G protein-coupled receptor F5 (1349 aa).

The N-terminal stretch at 1-24 (MKSSRTVTLYFVLIVICSSEATWS) is a signal peptide. Residues 25–1016 (RPAEPIVHPL…PGSLLKILLD (992 aa)) lie on the Extracellular side of the membrane. Residues Asn73, Asn94, Asn185, Asn254, Asn270, Asn286, Asn299, Asn326, Asn337, Asn349, Asn396, Asn470, Asn503, Asn538, Asn649, and Asn666 are each glycosylated (N-linked (GlcNAc...) asparagine). The SEA domain maps to 163–271 (PETYITLKIK…NSFQGTPSNE (109 aa)). Ig-like domains lie at 268-366 (PSNE…LDVT), 367-464 (PIRI…IAVT), and 469-559 (ANLT…KDVT). A disulfide bridge links Cys291 with Cys348. Cys389 and Cys447 are disulfide-bonded. Cys490 and Cys543 form a disulfide bridge. Ser819 bears the Phosphoserine mark. 3 N-linked (GlcNAc...) asparagine glycosylation sites follow: Asn820, Asn958, and Asn963. The GAIN-B domain occupies 842 to 1006 (TPPFLFHPNV…SILMSPDSPD (165 aa)). Cystine bridges form between Cys954–Cys988 and Cys973–Cys990. The GPS stretch occupies residues 954–1006 (CVFWNFSLANNTGGWDSSGCTVEDDGRDNRDRVFCKCNHLTSFSILMSPDSPD). Residues 994 to 1009 (TSFSILMSPDSPDPGS) are tethered agonist. Residues 1017 to 1036 (IISYIGLGFSIVSLAACLVV) traverse the membrane as a helical segment. Residues 1037-1055 (EAMVWKSVTKNRTSYMRHI) lie on the Cytoplasmic side of the membrane. Residues 1056-1078 (CIVNIALCLLIADIWFIVAGAIH) form a helical membrane-spanning segment. Topologically, residues 1079–1097 (DGHYPLNETACVAATFFIH) are extracellular. Asn1085 carries N-linked (GlcNAc...) asparagine glycosylation. Residues 1098–1120 (FFYLSVFFWMLTLGLMLFYRLIF) traverse the membrane as a helical segment. The Cytoplasmic segment spans residues 1121–1131 (ILHDASKSTQK). The helical transmembrane segment at 1132–1154 (AIAFSLGYGCPLIISSITVGVTQ) threads the bilayer. Topologically, residues 1155 to 1173 (PQEVYMRKNACWLNWEDTR) are extracellular. The chain crosses the membrane as a helical span at residues 1174–1196 (ALLAFAIPALIIVVVNVSITVVV). Topologically, residues 1197–1216 (ITKILRPSVGDKPGKQEKSS) are cytoplasmic. Residues 1217–1239 (LFQISKSIGVLTPLLGLTWGFGL) traverse the membrane as a helical segment. Topologically, residues 1240–1248 (ATVIQGSNA) are extracellular. Residues 1249 to 1271 (VFHIIFTLLNAFQGLFILLFGCL) traverse the membrane as a helical segment. The Cytoplasmic segment spans residues 1272 to 1349 (WDQKVQEALL…NSSSAYSLLN (78 aa)). Thr1303 bears the Phosphothreonine mark. A Phosphoserine modification is found at Ser1310. Low complexity predominate over residues 1329-1343 (STPETTSSSVENSSS). Residues 1329-1349 (STPETTSSSVENSSSAYSLLN) are disordered.

The protein belongs to the G-protein coupled receptor 2 family. Adhesion G-protein coupled receptor (ADGR) subfamily. In terms of assembly, homodimer; disulfide-linked. Heterodimer of 2 chains generated by proteolytic processing; the large extracellular N-terminal fragment and the membrane-bound C-terminal fragment predominantly remain associated and non-covalently linked. Fragment generates by the processing enzyme furin remains attached to the extracellular N-terminal fragment. Interacts (via N-terminal extracellular domain) with SFTPD. Post-translationally, highly glycosylated. In terms of processing, proteolytically cleaved at multiple sites: one in the GPS region of the GAIN-B domain (S1 site) and the other in the SEA domain (S2 site). The proteolytic cleavage at S1 site generates an extracellular subunit and a seven-transmembrane subunit. The proteolytic cleavage at S2 site generates a fragment that undergoes proteolytic cleavage by the processing enzyme furin. Highly expressed in the lung and to a much lesser extent in the kidney and heart. Dense localization in alveolar walls of the lung and in the intercalated cells of the collecting duct of the kidney.

The protein resides in the cell membrane. With respect to regulation, as an adhesion G protein-coupled receptor (aGPCR) exhibits a large N-terminal extracellular domain containing highly conserved GPCR autoproteolysis-inducing (GAIN) domain. During synthesis, intracellular autoproteolytic processing of nascent chain within the GAIN domain generates a mature protein, consisting of an N-terminal fragment that is non-covalently linked to the C-terminal fragment. The mature protein is routed to the plasma membrane where the N- and C-terminal fragments remain associated, forming the holoreceptor. Dissociation of the aGPCR fragments stimulates G protein signaling through the action of the tethered-peptide agonist stalk that is occluded within the GAIN domain in the holoreceptor form. This dissociation might be induced by ligand binding, such as that of sFNDC4. In terms of biological role, receptor that plays a critical role in lung surfactant homeostasis. May play a role in controlling adipocyte function. Its function is as follows. Adhesion G protein-coupled receptor. In alveolar type II (ATII or AT2) cells, required for normal lung surfactant homeostasis. Modulation of both surfactant secretion and uptake by ATII cells is mediated by the downstream activation of GNAQ/GNA11 proteins and may be a consequence of increased cortical F-actin assembly induced by ADGRF5 activation. In the kidney, may play a role in the regulation of acid excretion into the primary urine, possibly by regulating the surface expression of V-ATPase proton pump. As a receptor for soluble FNDC4 (sFNDC4), required for proper systemic glucose tolerance, specifically sensitizing white adipose tissue to insulin. Also plays a role in sFNDC4-induced decrease of local inflammation in white adipose tissue. The protein is Adhesion G protein-coupled receptor F5 (Adgrf5) of Rattus norvegicus (Rat).